Here is a 356-residue protein sequence, read N- to C-terminus: Chorismate synthase (356 aa).

NADP(+) contacts are provided by Arg-44 and Arg-49. FMN-binding positions include His-121–Ser-123, Gly-278, Lys-293–Ser-297, and Arg-320.

It belongs to the chorismate synthase family. Requires FMNH2 as cofactor.

The enzyme catalyses 5-O-(1-carboxyvinyl)-3-phosphoshikimate = chorismate + phosphate. It functions in the pathway metabolic intermediate biosynthesis; chorismate biosynthesis; chorismate from D-erythrose 4-phosphate and phosphoenolpyruvate: step 7/7. In terms of biological role, catalyzes the anti-1,4-elimination of the C-3 phosphate and the C-6 proR hydrogen from 5-enolpyruvylshikimate-3-phosphate (EPSP) to yield chorismate, which is the branch point compound that serves as the starting substrate for the three terminal pathways of aromatic amino acid biosynthesis. This reaction introduces a second double bond into the aromatic ring system. This is Chorismate synthase from Thermococcus gammatolerans (strain DSM 15229 / JCM 11827 / EJ3).